Here is a 304-residue protein sequence, read N- to C-terminus: Homoserine dehydrogenase (304 aa).

Positions 8, 10, 11, 38, 39, and 73 each coordinate NADP(+). Tyrosine 8 is an NADPH binding site. NADPH contacts are provided by valine 11 and arginine 38. Valine 11 contacts NAD(+). Residues serine 73, serine 74, threonine 100, and lysine 102 each coordinate NADPH. Serine 73 contributes to the NAD(+) binding site. Positions 100 and 102 each coordinate NADP(+). Positions 129 and 133 each coordinate Na(+). Residues glycine 182 and glutamate 185 each coordinate NADP(+). 2 residues coordinate L-homoserine: glutamate 185 and aspartate 196. Lysine 200 acts as the Proton donor in catalysis. Position 284 (glycine 284) interacts with NADP(+). Residue glycine 284 participates in NADPH binding. NAD(+) is bound at residue glycine 284.

This sequence belongs to the homoserine dehydrogenase family. Homodimer. It depends on a metal cation as a cofactor. The enzyme is activated by reductive cleavage of the interchain disulfide bond between the two subunits.

It carries out the reaction L-homoserine + NADP(+) = L-aspartate 4-semialdehyde + NADPH + H(+). The enzyme catalyses L-homoserine + NAD(+) = L-aspartate 4-semialdehyde + NADH + H(+). Its pathway is amino-acid biosynthesis; L-methionine biosynthesis via de novo pathway; L-homoserine from L-aspartate: step 3/3. It functions in the pathway amino-acid biosynthesis; L-threonine biosynthesis; L-threonine from L-aspartate: step 3/5. Inhibited by cysteine. Functionally, catalyzes the conversion of L-aspartate-beta-semialdehyde (L-Asa) to L-homoserine (L-Hse), the third step in the biosynthesis of threonine and methionine from aspartate. This chain is Homoserine dehydrogenase, found in Sulfurisphaera tokodaii (strain DSM 16993 / JCM 10545 / NBRC 100140 / 7) (Sulfolobus tokodaii).